The primary structure comprises 186 residues: Ribosome-recycling factor (186 aa).

This sequence belongs to the RRF family.

The protein resides in the cytoplasm. Responsible for the release of ribosomes from messenger RNA at the termination of protein biosynthesis. May increase the efficiency of translation by recycling ribosomes from one round of translation to another. The polypeptide is Ribosome-recycling factor (Rickettsia akari (strain Hartford)).